Here is a 93-residue protein sequence, read N- to C-terminus: MASEILVDHRQKALALLKLDADKILKLIQVQMDNLTMPQCPLYEEVLDTQMFGLSREIDFAVRLGLVDQHEGKKLLDKLERELSALHDAFTKK.

It belongs to the UPF0358 family.

This is UPF0358 protein BPUM_1375 from Bacillus pumilus (strain SAFR-032).